The primary structure comprises 78 residues: Small, acid-soluble spore protein Tlp (78 aa).

A disordered region spans residues S32 to Q78. A compositionally biased stretch (basic and acidic residues) spans E45 to Q78.

Belongs to the Tlp family.

The protein resides in the spore core. The protein is Small, acid-soluble spore protein Tlp of Bacillus licheniformis (strain ATCC 14580 / DSM 13 / JCM 2505 / CCUG 7422 / NBRC 12200 / NCIMB 9375 / NCTC 10341 / NRRL NRS-1264 / Gibson 46).